We begin with the raw amino-acid sequence, 349 residues long: 3-dehydroquinate synthase (349 aa).

Residues 63 to 68 (DGEEYK), 97 to 101 (GVIGD), 121 to 122 (TT), Lys134, Lys143, and 161 to 164 (FLTT) contribute to the NAD(+) site. Zn(2+) is bound by residues Glu176, His235, and His252.

Belongs to the sugar phosphate cyclases superfamily. Dehydroquinate synthase family. Co(2+) serves as cofactor. It depends on Zn(2+) as a cofactor. Requires NAD(+) as cofactor.

The protein resides in the cytoplasm. The catalysed reaction is 7-phospho-2-dehydro-3-deoxy-D-arabino-heptonate = 3-dehydroquinate + phosphate. It participates in metabolic intermediate biosynthesis; chorismate biosynthesis; chorismate from D-erythrose 4-phosphate and phosphoenolpyruvate: step 2/7. Functionally, catalyzes the conversion of 3-deoxy-D-arabino-heptulosonate 7-phosphate (DAHP) to dehydroquinate (DHQ). The sequence is that of 3-dehydroquinate synthase from Sulfurimonas denitrificans (strain ATCC 33889 / DSM 1251) (Thiomicrospira denitrificans (strain ATCC 33889 / DSM 1251)).